Here is a 732-residue protein sequence, read N- to C-terminus: MNFDQLTDEQKQQLYLQHLQQQQQLQQQQQQLQQQQHQLQQQQQSYHLQQQQAAYQQQNQAQLQQDDSYMDEDTSELINQPPVQLDHGSPIRQQPQMSAFMPSPRFAQSESFDNHLNVDPNNTERFTSMDSMNFQPPASTFTQLGNGSSTNLSEISSGQNSLLSNHSVNNLPTALTSDTSPPVQQHPQFQPQQQQQQQQPQQQQIFQQQQQQQQQQQQPQQSRAVVNQSVSTEAANSDMTGSNTKYVYFERKPNLLSKTTQDKAASIKLTLENYYTSSVSHAIERNQRRLELENKIANEDIGSSEERKNRQLQNLGKKESQFLRLKRTKLALEDFHTVKVIGKGAFGEVRLVQKKDTGKIYAMKTLLKSEMFNKDQLAHVKAERDVLAGSDSPWIVALYYSFQDSQYLYLIMEFLPGGDLMTMLIRWEVFTEDITRFYIAECVLAIEAIHKLGFIHRDIKPDNILIDNRGHVKLSDFGLSTGFHKTHDSNYYNKLLEKEPSNTHLQPNQLTSGRNSVMVDAIHLTMSNRQTMQTWRKSRRLMAYSTVGTPDYIAPEIFIHQGYGQECDWWSLGAIMFECLIGWPPFCSENPHDTYRKILNWQESFQIPEDVHLSPEAEDLIKRFLTSAENRIGRYGGAEEIKQHPFFRGVDWDSIRDVQAPFVPRLSSMTDTRHFPTDDLASVPDNPAMSKAMEQRELDAKNGGGRKNPKEDLPFIGYTYSRFDYLTRKNAL.

Positions 111–240 (SFDNHLNVDP…STEAANSDMT (130 aa)) are disordered. Residues 119 to 159 (DPNNTERFTSMDSMNFQPPASTFTQLGNGSSTNLSEISSGQ) show a composition bias toward polar residues. Low complexity predominate over residues 160 to 171 (NSLLSNHSVNNL). Positions 172–183 (PTALTSDTSPPV) are enriched in polar residues. The segment covering 185–221 (QHPQFQPQQQQQQQQPQQQQIFQQQQQQQQQQQQPQQ) has biased composition (low complexity). A compositionally biased stretch (polar residues) spans 222–240 (SRAVVNQSVSTEAANSDMT). Residues 281–310 (HAIERNQRRLELENKIANEDIGSSEERKNR) adopt a coiled-coil conformation. Residues 335–647 (FHTVKVIGKG…AEEIKQHPFF (313 aa)) form the Protein kinase domain. Residues 341 to 349 (IGKGAFGEV) and lysine 364 each bind ATP. Residue aspartate 458 is the Proton acceptor of the active site. In terms of domain architecture, AGC-kinase C-terminal spans 648–730 (RGVDWDSIRD…SRFDYLTRKN (83 aa)).

This sequence belongs to the protein kinase superfamily. STE Ser/Thr protein kinase family. COT1 subfamily. Interacts with MOB2 and BCR1.

It localises to the bud neck. The protein resides in the cell tip. It catalyses the reaction L-seryl-[protein] + ATP = O-phospho-L-seryl-[protein] + ADP + H(+). It carries out the reaction L-threonyl-[protein] + ATP = O-phospho-L-threonyl-[protein] + ADP + H(+). In terms of biological role, serine/threonine-protein kinase required for wild-type hyphal growth and transcriptional regulation of cell-wall-associated genes. Involved in the biofilm formation through phosphorylation of the master regulator of biofilm formation BCR1. The chain is Serine/threonine-protein kinase CBK1 (CBK1) from Candida albicans (strain SC5314 / ATCC MYA-2876) (Yeast).